A 123-amino-acid polypeptide reads, in one-letter code: Major pollen allergen Ole e 10 (123 aa).

Positions 1 to 21 are cleaved as a signal peptide; the sequence is MRGTAGVPDQPVPTPTPSVPT. The interval 1–37 is disordered; sequence MRGTAGVPDQPVPTPTPSVPTSSSPVPKPPTQGNKKW. Cysteines 38 and 101 form a disulfide.

Post-translationally, the N-terminus is blocked. Phosphorylated at Ser-24 when expressed as a recombinant protein in a heterologous system. In terms of processing, not glycosylated. Post-translationally, contains two additional disulfide bonds. In terms of tissue distribution, expressed in mature and germinating pollen.

The protein localises to the cytoplasmic vesicle. Functionally, carbohydrate-binding protein binding preferentially 1,3-beta-glucans. May be involved in pollen tube wall re-formation during germination. The protein is Major pollen allergen Ole e 10 of Olea europaea (Common olive).